The sequence spans 176 residues: Ribosome maturation factor RimM (176 aa).

The 76-residue stretch at 99 to 174 (KNEFYITDLI…IVLIQPEIWN (76 aa)) folds into the PRC barrel domain.

This sequence belongs to the RimM family. Binds ribosomal protein uS19.

The protein localises to the cytoplasm. An accessory protein needed during the final step in the assembly of 30S ribosomal subunit, possibly for assembly of the head region. Essential for efficient processing of 16S rRNA. May be needed both before and after RbfA during the maturation of 16S rRNA. It has affinity for free ribosomal 30S subunits but not for 70S ribosomes. In Leptospira interrogans serogroup Icterohaemorrhagiae serovar copenhageni (strain Fiocruz L1-130), this protein is Ribosome maturation factor RimM.